A 241-amino-acid polypeptide reads, in one-letter code: Adapter protein MecA (241 aa).

The disordered stretch occupies residues 115 to 141 (TDSNDKNNDDSSYMSDGNPADLNGYAN).

It belongs to the MecA family. Homodimer.

Functionally, enables the recognition and targeting of unfolded and aggregated proteins to the ClpC protease or to other proteins involved in proteolysis. The sequence is that of Adapter protein MecA from Pediococcus pentosaceus (strain ATCC 25745 / CCUG 21536 / LMG 10740 / 183-1w).